The sequence spans 527 residues: Peptide chain release factor 3 (527 aa).

One can recognise a tr-type G domain in the interval 9 to 278 (NKRRTFAIIS…GLTQWAPKPQ (270 aa)). Residues 18–25 (SHPDAGKT), 86–90 (DTPGH), and 140–143 (NKLD) contribute to the GTP site.

The protein belongs to the TRAFAC class translation factor GTPase superfamily. Classic translation factor GTPase family. PrfC subfamily.

It is found in the cytoplasm. In terms of biological role, increases the formation of ribosomal termination complexes and stimulates activities of RF-1 and RF-2. It binds guanine nucleotides and has strong preference for UGA stop codons. It may interact directly with the ribosome. The stimulation of RF-1 and RF-2 is significantly reduced by GTP and GDP, but not by GMP. The sequence is that of Peptide chain release factor 3 from Haemophilus influenzae (strain PittEE).